Consider the following 276-residue polypeptide: Type II pantothenate kinase (276 aa).

8–15 contributes to the ATP binding site; sequence DAGGTLTK. Catalysis depends on glutamate 76, which acts as the Proton acceptor. ATP-binding positions include threonine 105, 127 to 131, phenylalanine 143, and serine 230; that span reads GGTIM.

Belongs to the type II pantothenate kinase family. As to quaternary structure, homodimer.

The protein resides in the cytoplasm. The enzyme catalyses (R)-pantothenate + ATP = (R)-4'-phosphopantothenate + ADP + H(+). It functions in the pathway cofactor biosynthesis; coenzyme A biosynthesis; CoA from (R)-pantothenate: step 1/5. Its function is as follows. Catalyzes the phosphorylation of pantothenate (Pan), the first step in CoA biosynthesis. The chain is Type II pantothenate kinase from Bacillus cereus (strain AH820).